We begin with the raw amino-acid sequence, 434 residues long: D-amino acid dehydrogenase (434 aa).

An FAD-binding site is contributed by 3–17 (VIVLGSGVIGTTTAY).

The protein belongs to the DadA oxidoreductase family. The cofactor is FAD.

The enzyme catalyses a D-alpha-amino acid + A + H2O = a 2-oxocarboxylate + AH2 + NH4(+). Its pathway is amino-acid degradation; D-alanine degradation; NH(3) and pyruvate from D-alanine: step 1/1. Functionally, oxidative deamination of D-amino acids. The sequence is that of D-amino acid dehydrogenase from Bordetella petrii (strain ATCC BAA-461 / DSM 12804 / CCUG 43448).